The primary structure comprises 166 residues: Urease accessory protein UreE (166 aa).

The protein belongs to the UreE family.

The protein localises to the cytoplasm. Functionally, involved in urease metallocenter assembly. Binds nickel. Probably functions as a nickel donor during metallocenter assembly. This is Urease accessory protein UreE from Pseudomonas savastanoi pv. phaseolicola (strain 1448A / Race 6) (Pseudomonas syringae pv. phaseolicola (strain 1448A / Race 6)).